Reading from the N-terminus, the 247-residue chain is Probable transcriptional regulatory protein Tola_2714 (247 aa).

The segment at 1–21 (MAGHSKWANIKHRKAAQDAKR) is disordered.

Belongs to the TACO1 family.

Its subcellular location is the cytoplasm. The chain is Probable transcriptional regulatory protein Tola_2714 from Tolumonas auensis (strain DSM 9187 / NBRC 110442 / TA 4).